The primary structure comprises 581 residues: Putative aluminum-activated malate transporter 3 (581 aa).

6 helical membrane passes run 98–118 (MGLA…GLEL), 122–142 (YLWA…ATFS), 148–164 (GLGT…MSWI), 167–187 (MTGN…AFFA), 201–218 (YGFR…VSGY), and 231–251 (FLLI…IYPI).

The protein belongs to the aromatic acid exporter (TC 2.A.85) family.

The protein resides in the membrane. In terms of biological role, malate transporter. The polypeptide is Putative aluminum-activated malate transporter 3 (ALMT3) (Arabidopsis thaliana (Mouse-ear cress)).